Here is a 443-residue protein sequence, read N- to C-terminus: Glutamate--tRNA ligase 1 (443 aa).

Residues 7 to 17 (PSPTGYLHVGN) carry the 'HIGH' region motif. Positions 236 to 240 (KISKR) match the 'KMSKS' region motif. Lys239 lines the ATP pocket.

The protein belongs to the class-I aminoacyl-tRNA synthetase family. Glutamate--tRNA ligase type 1 subfamily. In terms of assembly, monomer.

The protein localises to the cytoplasm. It carries out the reaction tRNA(Glu) + L-glutamate + ATP = L-glutamyl-tRNA(Glu) + AMP + diphosphate. In terms of biological role, catalyzes the attachment of glutamate to tRNA(Glu) in a two-step reaction: glutamate is first activated by ATP to form Glu-AMP and then transferred to the acceptor end of tRNA(Glu). This chain is Glutamate--tRNA ligase 1, found in Ehrlichia chaffeensis (strain ATCC CRL-10679 / Arkansas).